Reading from the N-terminus, the 352-residue chain is Ion-translocating oxidoreductase complex subunit D (352 aa).

The next 4 helical transmembrane spans lie at 20-40 (IMLLVLIAALPGVAAQTWFFG), 44-64 (LFQIVLAAVTALFAEAIVLSL), 78-109 (ALLTGLLLAVSIPPLAPWWMIVLGTGFAIIIA), and 123-143 (PAMIGYVVLLISFPVQMTSWL). FMN phosphoryl threonine is present on T187. 5 helical membrane-spanning segments follow: residues 214 to 234 (VLAGVGWQWVNLAWLVGGVFL), 242 to 262 (WHIPVSFLVTLALCATLGWLF), 267 to 287 (LASPQLHLLSGATMLGAFFIL), 301 to 321 (LIFGALAGVLVWLIRSFGGYP), and 322 to 342 (DGVAFAVLLANITVPLIDYYT).

This sequence belongs to the NqrB/RnfD family. As to quaternary structure, the complex is composed of six subunits: RsxA, RsxB, RsxC, RsxD, RsxE and RsxG. FMN is required as a cofactor.

Its subcellular location is the cell inner membrane. Functionally, part of a membrane-bound complex that couples electron transfer with translocation of ions across the membrane. Required to maintain the reduced state of SoxR. The polypeptide is Ion-translocating oxidoreductase complex subunit D (Salmonella arizonae (strain ATCC BAA-731 / CDC346-86 / RSK2980)).